The chain runs to 248 residues: Triosephosphate isomerase (248 aa).

Substrate contacts are provided by Asn-11 and Lys-13. The active-site Electrophile is His-95. Glu-165 serves as the catalytic Proton acceptor.

It belongs to the triosephosphate isomerase family. Homodimer.

It is found in the cytoplasm. It carries out the reaction D-glyceraldehyde 3-phosphate = dihydroxyacetone phosphate. The enzyme catalyses dihydroxyacetone phosphate = methylglyoxal + phosphate. The protein operates within carbohydrate degradation; glycolysis; D-glyceraldehyde 3-phosphate from glycerone phosphate: step 1/1. Its pathway is carbohydrate biosynthesis; gluconeogenesis. Its function is as follows. Triosephosphate isomerase is an extremely efficient metabolic enzyme that catalyzes the interconversion between dihydroxyacetone phosphate (DHAP) and D-glyceraldehyde-3-phosphate (G3P) in glycolysis and gluconeogenesis. In terms of biological role, it is also responsible for the non-negligible production of methylglyoxal a reactive cytotoxic side-product that modifies and can alter proteins, DNA and lipids. This chain is Triosephosphate isomerase (tpi1), found in Oryzias latipes (Japanese rice fish).